Here is a 188-residue protein sequence, read N- to C-terminus: UPF0398 protein OEOE_1093 (188 aa).

It belongs to the UPF0398 family.

The chain is UPF0398 protein OEOE_1093 from Oenococcus oeni (strain ATCC BAA-331 / PSU-1).